The following is a 490-amino-acid chain: RNA-binding protein P (490 aa).

Residues 1 to 112 (MGKKRKLDSK…EEEEAAERDA (112 aa)) form a disordered region. Low complexity predominate over residues 13–36 (AAARSAAARAAAAAAAAAAAAAVA). Residues 74–108 (GGEEEEVEEVEVEEEVEVDEDEDGEGEGEEEEEAA) show a composition bias toward acidic residues. 2 consecutive RRM domains span residues 156 to 233 (RKIF…LASV) and 267 to 343 (RKIF…QKAI).

In terms of assembly, forms homodimers. Interacts with RBP-L and RBP-208. Interacts with NSF.

The protein localises to the nucleus. Its subcellular location is the cytoplasm. Its function is as follows. RNA-binding protein that binds to a cis-localization element or zipcode, within the 5'-CDS of prolamine RNA. Binds strongly to glutelin mRNA, particularly to 3'-UTR and zipcode RNA. Recognizes and binds to glutelin zipcode RNA, which is required for proper mRNA localization to cisternal endoplasmic reticulum. Exhibits strong binding activity to a glutelin intron sequence and may participate in mRNA splicing. Required for the correct localization of glutelin and prolamine mRNA in endosperm cells during grain development. RBP-P and RBP-L form a quaternary complex with the membrane trafficking factors NSF and RAB5A. This quaternay complex carries glutelin mRNAs for active transport on endosomes to the cortical endoplasmic reticulum membrane, and enables endosome-mediated glutelin mRNA transport in endosperm cells. This is RNA-binding protein P from Oryza sativa subsp. japonica (Rice).